The primary structure comprises 331 residues: DNA-directed RNA polymerase subunit alpha (331 aa).

The tract at residues 1-237 (MQSSVTEFLI…NQLESFVYLR (237 aa)) is alpha N-terminal domain (alpha-NTD). Positions 251 to 331 (FDPILLRPVD…NWPPDNILDN (81 aa)) are alpha C-terminal domain (alpha-CTD).

This sequence belongs to the RNA polymerase alpha chain family. As to quaternary structure, homodimer. The RNAP catalytic core consists of 2 alpha, 1 beta, 1 beta' and 1 omega subunit. When a sigma factor is associated with the core the holoenzyme is formed, which can initiate transcription.

The catalysed reaction is RNA(n) + a ribonucleoside 5'-triphosphate = RNA(n+1) + diphosphate. Its function is as follows. DNA-dependent RNA polymerase catalyzes the transcription of DNA into RNA using the four ribonucleoside triphosphates as substrates. The protein is DNA-directed RNA polymerase subunit alpha of Buchnera aphidicola subsp. Baizongia pistaciae (strain Bp).